A 480-amino-acid chain; its full sequence is Proline--tRNA ligase (480 aa).

It belongs to the class-II aminoacyl-tRNA synthetase family. ProS type 3 subfamily. Homodimer.

It is found in the cytoplasm. It catalyses the reaction tRNA(Pro) + L-proline + ATP = L-prolyl-tRNA(Pro) + AMP + diphosphate. Its function is as follows. Catalyzes the attachment of proline to tRNA(Pro) in a two-step reaction: proline is first activated by ATP to form Pro-AMP and then transferred to the acceptor end of tRNA(Pro). This Chloroflexus aurantiacus (strain ATCC 29364 / DSM 637 / Y-400-fl) protein is Proline--tRNA ligase.